We begin with the raw amino-acid sequence, 158 residues long: uncharacterized protein (158 aa).

An FPG-type zinc finger spans residues 109 to 143 (RVHARTGLPCPVCGDTVREVSFADKSFQYCPTCQT).

This is an uncharacterized protein from Mycobacterium tuberculosis (strain ATCC 25618 / H37Rv).